The chain runs to 70 residues: Small ribosomal subunit protein bS21 (70 aa).

It belongs to the bacterial ribosomal protein bS21 family.

This chain is Small ribosomal subunit protein bS21, found in Campylobacter jejuni subsp. jejuni serotype O:23/36 (strain 81-176).